A 59-amino-acid chain; its full sequence is Large ribosomal subunit protein bL32 (59 aa).

The segment at 1 to 20 is disordered; that stretch reads MAVQQNKKSRSRKGMRRSHD. The span at 7-19 shows a compositional bias: basic residues; it reads KKSRSRKGMRRSH.

Belongs to the bacterial ribosomal protein bL32 family.

The protein is Large ribosomal subunit protein bL32 of Nitratidesulfovibrio vulgaris (strain ATCC 29579 / DSM 644 / CCUG 34227 / NCIMB 8303 / VKM B-1760 / Hildenborough) (Desulfovibrio vulgaris).